The primary structure comprises 298 residues: tRNA dimethylallyltransferase (298 aa).

An ATP-binding site is contributed by 16–23 (GPTASGKS). 18-23 (TASGKS) is a binding site for substrate. Interaction with substrate tRNA stretches follow at residues 41-44 (DSMQ) and 165-169 (QRIVR).

This sequence belongs to the IPP transferase family. In terms of assembly, monomer. Requires Mg(2+) as cofactor.

It carries out the reaction adenosine(37) in tRNA + dimethylallyl diphosphate = N(6)-dimethylallyladenosine(37) in tRNA + diphosphate. Functionally, catalyzes the transfer of a dimethylallyl group onto the adenine at position 37 in tRNAs that read codons beginning with uridine, leading to the formation of N6-(dimethylallyl)adenosine (i(6)A). The protein is tRNA dimethylallyltransferase of Rhizobium rhizogenes (strain K84 / ATCC BAA-868) (Agrobacterium radiobacter).